Consider the following 587-residue polypeptide: Arginine--tRNA ligase (587 aa).

A 'HIGH' region motif is present at residues 127–137; it reads ANPTGPLHVGH.

It belongs to the class-I aminoacyl-tRNA synthetase family. As to quaternary structure, monomer.

It is found in the cytoplasm. The enzyme catalyses tRNA(Arg) + L-arginine + ATP = L-arginyl-tRNA(Arg) + AMP + diphosphate. The sequence is that of Arginine--tRNA ligase from Dechloromonas aromatica (strain RCB).